The following is a 345-amino-acid chain: Phosphoribosylformylglycinamidine cyclo-ligase (345 aa).

This sequence belongs to the AIR synthase family.

It localises to the cytoplasm. It catalyses the reaction 2-formamido-N(1)-(5-O-phospho-beta-D-ribosyl)acetamidine + ATP = 5-amino-1-(5-phospho-beta-D-ribosyl)imidazole + ADP + phosphate + H(+). Its pathway is purine metabolism; IMP biosynthesis via de novo pathway; 5-amino-1-(5-phospho-D-ribosyl)imidazole from N(2)-formyl-N(1)-(5-phospho-D-ribosyl)glycinamide: step 2/2. This is Phosphoribosylformylglycinamidine cyclo-ligase from Pasteurella multocida (strain Pm70).